We begin with the raw amino-acid sequence, 239 residues long: Ribonuclease PH (239 aa).

Phosphate contacts are provided by residues Arg-87 and Gly-125 to Arg-127.

This sequence belongs to the RNase PH family. Homohexameric ring arranged as a trimer of dimers.

It catalyses the reaction tRNA(n+1) + phosphate = tRNA(n) + a ribonucleoside 5'-diphosphate. Functionally, phosphorolytic 3'-5' exoribonuclease that plays an important role in tRNA 3'-end maturation. Removes nucleotide residues following the 3'-CCA terminus of tRNAs; can also add nucleotides to the ends of RNA molecules by using nucleoside diphosphates as substrates, but this may not be physiologically important. Probably plays a role in initiation of 16S rRNA degradation (leading to ribosome degradation) during starvation. In Acaryochloris marina (strain MBIC 11017), this protein is Ribonuclease PH.